Consider the following 614-residue polypeptide: Kelch-like protein 40 (614 aa).

Residues 33 to 100 (IDCVLKIQGK…IYTSEIEITE (68 aa)) enclose the BTB domain. A BACK domain is found at 135–237 (CLAIFRLGLL…PQDYIKNKVE (103 aa)). 5 Kelch repeats span residues 353-405 (QLFV…ESEN), 406-455 (SIYL…SHDN), 456-503 (LVYV…VHKG), 504-550 (KIFI…SMNG), and 552-606 (LYAI…AARL).

The protein belongs to the KLHL40 family. In terms of assembly, component of the BCR(KLHL40) E3 ubiquitin ligase complex.

It is found in the cytoplasm. It localises to the myofibril. The protein resides in the sarcomere. Its subcellular location is the a band. The protein localises to the i band. In terms of biological role, substrate-specific adapter of a BCR (BTB-CUL3-RBX1) E3 ubiquitin ligase complex that acts as a key regulator of skeletal muscle development. This Xenopus laevis (African clawed frog) protein is Kelch-like protein 40 (klhl40).